The chain runs to 252 residues: MPDNEGQHSVARRDGGWKRVVLKLSGEAFAGEEQLGISPKVVGYIAQAIAEAVAKGIQVAVVIGGGNMFRGAELSQGGMERSRADYMGMLGTVINCLALQDFLERLGIETRVQTAIHMSQVAEAYIPRRAIRHLEKGRVVIFGAGLGAPFFSTDTAAAQRALEIGAQAVLKGTQVDGVYDSDPRKNPAAVRFDRLDYNEVLTRGLKVMDATAVSLCMDNGLPIVVFDLMGKGNILRAVQGEKIGTIVCPPDV.

Residue Lys-23–Gly-26 coordinates ATP. Gly-65 provides a ligand contact to UMP. ATP is bound by residues Gly-66 and Arg-70. Residues Asp-85 and Leu-146–Thr-153 each bind UMP. Residues Thr-173, Gln-174, Tyr-179, and Asp-182 each coordinate ATP.

This sequence belongs to the UMP kinase family. As to quaternary structure, homohexamer.

It is found in the cytoplasm. The catalysed reaction is UMP + ATP = UDP + ADP. It participates in pyrimidine metabolism; CTP biosynthesis via de novo pathway; UDP from UMP (UMPK route): step 1/1. Inhibited by UTP. Functionally, catalyzes the reversible phosphorylation of UMP to UDP. In Thermobifida fusca (strain YX), this protein is Uridylate kinase.